Reading from the N-terminus, the 262-residue chain is Acyl-[acyl-carrier-protein]--UDP-N-acetylglucosamine O-acyltransferase (262 aa).

It belongs to the transferase hexapeptide repeat family. LpxA subfamily. Homotrimer.

It is found in the cytoplasm. The enzyme catalyses a (3R)-hydroxyacyl-[ACP] + UDP-N-acetyl-alpha-D-glucosamine = a UDP-3-O-[(3R)-3-hydroxyacyl]-N-acetyl-alpha-D-glucosamine + holo-[ACP]. It functions in the pathway glycolipid biosynthesis; lipid IV(A) biosynthesis; lipid IV(A) from (3R)-3-hydroxytetradecanoyl-[acyl-carrier-protein] and UDP-N-acetyl-alpha-D-glucosamine: step 1/6. Involved in the biosynthesis of lipid A, a phosphorylated glycolipid that anchors the lipopolysaccharide to the outer membrane of the cell. In Burkholderia lata (strain ATCC 17760 / DSM 23089 / LMG 22485 / NCIMB 9086 / R18194 / 383), this protein is Acyl-[acyl-carrier-protein]--UDP-N-acetylglucosamine O-acyltransferase.